A 285-amino-acid chain; its full sequence is N(G),N(G)-dimethylarginine dimethylaminohydrolase 1 (285 aa).

Ala-2 carries the post-translational modification N-acetylalanine. Residues Leu-30, Asp-73, 78 to 79 (ED), Arg-98, and Arg-145 contribute to the substrate site. The active-site Proton donor is His-173. Cys-222 bears the S-nitrosocysteine mark. Val-268 is a substrate binding site. Cys-274 bears the S-nitrosocysteine mark. Cys-274 (nucleophile) is an active-site residue. Cys-274 provides a ligand contact to Zn(2+).

This sequence belongs to the DDAH family. Monomer. As to expression, detected in brain, liver, kidney and pancreas, and at low levels in skeletal muscle.

The catalysed reaction is N(omega),N(omega)-dimethyl-L-arginine + H2O = dimethylamine + L-citrulline. It catalyses the reaction N(omega)-methyl-L-arginine + H2O = L-citrulline + methylamine. Its activity is regulated as follows. Inhibited by zinc ions. Enzyme purified in the absence of 1,10-phenanthroline contains on average 0.4 zinc atoms per subunit. Inhibited by 4-hydroxy-nonenal through the formation of a covalent adduct with His-173. Competitively inhibited by N(5)-iminopropyl-ornithine. Functionally, hydrolyzes N(G),N(G)-dimethyl-L-arginine (ADMA) and N(G)-monomethyl-L-arginine (MMA) which act as inhibitors of NOS. Has therefore a role in the regulation of nitric oxide generation. The protein is N(G),N(G)-dimethylarginine dimethylaminohydrolase 1 of Homo sapiens (Human).